Reading from the N-terminus, the 900-residue chain is Alanine--tRNA ligase (900 aa).

Zn(2+) contacts are provided by H604, H608, C708, and H712.

The protein belongs to the class-II aminoacyl-tRNA synthetase family. Zn(2+) is required as a cofactor.

It localises to the cytoplasm. The catalysed reaction is tRNA(Ala) + L-alanine + ATP = L-alanyl-tRNA(Ala) + AMP + diphosphate. Functionally, catalyzes the attachment of alanine to tRNA(Ala) in a two-step reaction: alanine is first activated by ATP to form Ala-AMP and then transferred to the acceptor end of tRNA(Ala). Also edits incorrectly charged Ser-tRNA(Ala) and Gly-tRNA(Ala) via its editing domain. The chain is Alanine--tRNA ligase from Saccharolobus islandicus (strain L.S.2.15 / Lassen #1) (Sulfolobus islandicus).